Here is a 270-residue protein sequence, read N- to C-terminus: Fibroblast growth factor 5 (270 aa).

Positions 1–20 (MSLSLLLLLFLSHLILSAWA) are cleaved as a signal peptide. The segment at 26–84 (LAPKGQPGPAATGRNPGGAGGSSTSGGTTSSSSSSVSSAPGASPGIRGSGSEQGSFQWS) is disordered. Residues 40 to 49 (NPGGAGGSST) are compositionally biased toward gly residues. Positions 50-70 (SGGTTSSSSSSVSSAPGASPG) are enriched in low complexity. Residues 75-84 (GSEQGSFQWS) show a composition bias toward polar residues. Residue Asn112 is glycosylated (N-linked (GlcNAc...) asparagine). Positions 237-257 (EKKKPPSHVKPKVPLSAPRKS) are disordered.

Belongs to the heparin-binding growth factors family. In terms of assembly, interacts with FGFR1 and FGFR2. Affinity between fibroblast growth factors (FGFs) and their receptors is increased by heparan sulfate glycosaminoglycans that function as coreceptors.

The protein localises to the secreted. Plays an important role in the regulation of cell proliferation and cell differentiation. Required for normal regulation of the hair growth cycle. Functions as an inhibitor of hair elongation by promoting progression from anagen, the growth phase of the hair follicle, into catagen the apoptosis-induced regression phase. The protein is Fibroblast growth factor 5 (FGF5) of Canis lupus familiaris (Dog).